The sequence spans 334 residues: Ornithine carbamoyltransferase (334 aa).

Residues 57–60, Gln-84, Arg-108, and 135–138 contribute to the carbamoyl phosphate site; these read STRT and HPTQ. L-ornithine contacts are provided by residues Asn-169, Asp-233, and 237-238; that span reads SM. Residues 275-276 and Arg-320 contribute to the carbamoyl phosphate site; that span reads CL.

It belongs to the aspartate/ornithine carbamoyltransferase superfamily. OTCase family.

The protein resides in the cytoplasm. The enzyme catalyses carbamoyl phosphate + L-ornithine = L-citrulline + phosphate + H(+). It participates in amino-acid biosynthesis; L-arginine biosynthesis; L-arginine from L-ornithine and carbamoyl phosphate: step 1/3. In terms of biological role, reversibly catalyzes the transfer of the carbamoyl group from carbamoyl phosphate (CP) to the N(epsilon) atom of ornithine (ORN) to produce L-citrulline. The sequence is that of Ornithine carbamoyltransferase (argF) from Pasteurella multocida (strain Pm70).